We begin with the raw amino-acid sequence, 452 residues long: Lysine-rich nucleolar protein 1 (452 aa).

Disordered regions lie at residues 1 to 28, 55 to 161, and 184 to 305; these read MITK…VKEP, VIQE…AFSG, and REQA…PDTD. Lysine 7 participates in a covalent cross-link: Glycyl lysine isopeptide (Lys-Gly) (interchain with G-Cter in SUMO2). Residues 65 to 75 show a composition bias toward basic residues; that stretch reads LVKKKKKKKGH. A compositionally biased stretch (basic and acidic residues) spans 78-98; it reads ICEEHLEPEITLRAGRTERSH. Phosphoserine is present on serine 112. A Glycyl lysine isopeptide (Lys-Gly) (interchain with G-Cter in SUMO2) cross-link involves residue lysine 126. Basic and acidic residues predominate over residues 127–139; it reads TSPDPRQDEEVTR. At serine 128 the chain carries Phosphoserine. 2 stretches are compositionally biased toward basic residues: residues 140–151 and 258–267; these read VGKKLKKHKKEK and SVKKKVKSKK. A Phosphoserine modification is found at serine 258. Lysine 280 is covalently cross-linked (Glycyl lysine isopeptide (Lys-Gly) (interchain with G-Cter in SUMO2)). A compositionally biased stretch (acidic residues) spans 293 to 305; sequence VAEEPWEEEPDTD. The tract at residues 300-452 is interaction with ZNF106; sequence EEPDTDLEVV…NASKSIKFED (153 aa). Threonine 304 is subject to Phosphothreonine. Glycyl lysine isopeptide (Lys-Gly) (interchain with G-Cter in SUMO2) cross-links involve residues lysine 313, lysine 347, lysine 367, lysine 369, and lysine 401. Arginine 424 is modified (omega-N-methylarginine). Lysine 436 participates in a covalent cross-link: Glycyl lysine isopeptide (Lys-Gly) (interchain with G-Cter in SUMO2).

As to quaternary structure, interacts with ZNF106.

The protein resides in the nucleus. Its subcellular location is the nucleolus. The sequence is that of Lysine-rich nucleolar protein 1 (KNOP1) from Bos taurus (Bovine).